A 295-amino-acid chain; its full sequence is Protein transport protein SSO2 (295 aa).

The span at 1–18 (MSNPYQNSQNGYQQNNSY) shows a compositional bias: low complexity. Positions 1–31 (MSNPYQNSQNGYQQNNSYELNNYPNKQYSSS) are disordered. At 1-270 (MSNPYQNSQN…SAKSARKKKL (270 aa)) the chain is on the cytoplasmic side. Over residues 19-31 (ELNNYPNKQYSSS) the composition is skewed to polar residues. The stretch at 33-110 (EDDFVQFMNE…NRIKNVQTQA (78 aa)) forms a coiled coil. Residues 196–258 (LNEVQVRHRE…EQGVGHTNKA (63 aa)) form the t-SNARE coiled-coil homology domain. A helical; Anchor for type IV membrane protein transmembrane segment spans residues 271–291 (WCFFICLLIVIILAVILGAYF). Over 292–295 (GTRK) the chain is Extracellular.

It belongs to the syntaxin family.

It is found in the membrane. Late secretory t-SNARE protein required for secretion and proper cytokinesis. Plays an important role in the secretion of virulence-associated extracellular enzymes and vesicle-mediated polarized hyphal growth. This Candida albicans (strain SC5314 / ATCC MYA-2876) (Yeast) protein is Protein transport protein SSO2 (SSO2).